A 254-amino-acid polypeptide reads, in one-letter code: Coproheme decarboxylase (254 aa).

Fe-coproporphyrin III is bound by residues R136, 150–154 (YPMDK), H177, Q190, and S228. Y150 is an active-site residue.

This sequence belongs to the ChdC family. Type 1 subfamily. Requires Fe-coproporphyrin III as cofactor.

It carries out the reaction Fe-coproporphyrin III + 2 H2O2 + 2 H(+) = heme b + 2 CO2 + 4 H2O. It catalyses the reaction Fe-coproporphyrin III + H2O2 + H(+) = harderoheme III + CO2 + 2 H2O. The catalysed reaction is harderoheme III + H2O2 + H(+) = heme b + CO2 + 2 H2O. It functions in the pathway porphyrin-containing compound metabolism; protoheme biosynthesis. Its function is as follows. Involved in coproporphyrin-dependent heme b biosynthesis. Catalyzes the decarboxylation of Fe-coproporphyrin III (coproheme) to heme b (protoheme IX), the last step of the pathway. The reaction occurs in a stepwise manner with a three-propionate harderoheme intermediate. The protein is Coproheme decarboxylase of Bacillus subtilis (strain 168).